Reading from the N-terminus, the 239-residue chain is 4-hydroxy-tetrahydrodipicolinate reductase (239 aa).

NAD(+) contacts are provided by residues 8–13 (GSTGKM), 78–80 (GTT), and 102–105 (SANM). Residue H134 is the Proton donor/acceptor of the active site. H135 serves as a coordination point for (S)-2,3,4,5-tetrahydrodipicolinate. The active-site Proton donor is K138. 144-145 (GT) contributes to the (S)-2,3,4,5-tetrahydrodipicolinate binding site.

It belongs to the DapB family.

The protein resides in the cytoplasm. The catalysed reaction is (S)-2,3,4,5-tetrahydrodipicolinate + NAD(+) + H2O = (2S,4S)-4-hydroxy-2,3,4,5-tetrahydrodipicolinate + NADH + H(+). The enzyme catalyses (S)-2,3,4,5-tetrahydrodipicolinate + NADP(+) + H2O = (2S,4S)-4-hydroxy-2,3,4,5-tetrahydrodipicolinate + NADPH + H(+). The protein operates within amino-acid biosynthesis; L-lysine biosynthesis via DAP pathway; (S)-tetrahydrodipicolinate from L-aspartate: step 4/4. Its function is as follows. Catalyzes the conversion of 4-hydroxy-tetrahydrodipicolinate (HTPA) to tetrahydrodipicolinate. The polypeptide is 4-hydroxy-tetrahydrodipicolinate reductase (Rickettsia conorii (strain ATCC VR-613 / Malish 7)).